A 41-amino-acid chain; its full sequence is Large ribosomal subunit protein bL36 (41 aa).

The protein belongs to the bacterial ribosomal protein bL36 family.

The protein is Large ribosomal subunit protein bL36 of Maricaulis maris (strain MCS10) (Caulobacter maris).